The sequence spans 129 residues: Small ribosomal subunit protein uS11 (129 aa).

The protein belongs to the universal ribosomal protein uS11 family. In terms of assembly, part of the 30S ribosomal subunit. Interacts with proteins S7 and S18. Binds to IF-3.

Its function is as follows. Located on the platform of the 30S subunit, it bridges several disparate RNA helices of the 16S rRNA. Forms part of the Shine-Dalgarno cleft in the 70S ribosome. The chain is Small ribosomal subunit protein uS11 from Staphylococcus carnosus (strain TM300).